A 59-amino-acid polypeptide reads, in one-letter code: Large ribosomal subunit protein bL32 (59 aa).

Residues Met-1–Arg-16 are compositionally biased toward basic residues. The segment at Met-1 to Asp-59 is disordered. Residues Ile-28–Leu-44 are compositionally biased toward basic and acidic residues.

It belongs to the bacterial ribosomal protein bL32 family.

The polypeptide is Large ribosomal subunit protein bL32 (Bartonella quintana (strain Toulouse) (Rochalimaea quintana)).